Reading from the N-terminus, the 320-residue chain is Phosphoribosylaminoimidazole-succinocarboxamide synthase (320 aa).

Residues glutamate 283–threonine 303 form a disordered region.

Belongs to the SAICAR synthetase family.

It catalyses the reaction 5-amino-1-(5-phospho-D-ribosyl)imidazole-4-carboxylate + L-aspartate + ATP = (2S)-2-[5-amino-1-(5-phospho-beta-D-ribosyl)imidazole-4-carboxamido]succinate + ADP + phosphate + 2 H(+). The protein operates within purine metabolism; IMP biosynthesis via de novo pathway; 5-amino-1-(5-phospho-D-ribosyl)imidazole-4-carboxamide from 5-amino-1-(5-phospho-D-ribosyl)imidazole-4-carboxylate: step 1/2. This is Phosphoribosylaminoimidazole-succinocarboxamide synthase from Rhodopirellula baltica (strain DSM 10527 / NCIMB 13988 / SH1).